Here is a 276-residue protein sequence, read N- to C-terminus: Glutamate 5-kinase (276 aa).

Lysine 14 provides a ligand contact to ATP. Positions 54, 141, and 157 each coordinate substrate. ATP contacts are provided by residues 177 to 178 and 219 to 225; these read SD and TGGMLTK.

Belongs to the glutamate 5-kinase family.

The protein localises to the cytoplasm. It carries out the reaction L-glutamate + ATP = L-glutamyl 5-phosphate + ADP. The protein operates within amino-acid biosynthesis; L-proline biosynthesis; L-glutamate 5-semialdehyde from L-glutamate: step 1/2. Catalyzes the transfer of a phosphate group to glutamate to form L-glutamate 5-phosphate. The protein is Glutamate 5-kinase of Listeria innocua serovar 6a (strain ATCC BAA-680 / CLIP 11262).